Reading from the N-terminus, the 104-residue chain is LHDPCDNTEDCEDGLECNRNKCLIPYDSDKTCETGWDCVHGVWCSSFPGGSPGCRMDYRCKNEQCEDPATECVDEICGRKEGERCIGPCKAGLTCRNGYCRKPW.

Post-translationally, contains 8 disulfide bonds. Expressed by the venom duct.

It localises to the secreted. Its function is as follows. Acts as a neurotoxin by inhibiting an ion channel. The chain is Turripeptide OL55-like from Iotyrris cingulifera (Sea snail).